Reading from the N-terminus, the 108-residue chain is Small proline-rich protein 2H (108 aa).

Over residues 1-11 the composition is skewed to low complexity; sequence MSYQQQQCKQP. A disordered region spans residues 1-22; the sequence is MSYQQQQCKQPCQPPPVCPPPQ. Positions 12–22 are enriched in pro residues; sequence CQPPPVCPPPQ. Repeat copies occupy residues 21 to 29, 30 to 38, 39 to 47, 48 to 56, 57 to 65, 66 to 74, and 75 to 83. Residues 21-83 form a 7 X 9 AA tandem repeats of P-[KQ]-C-[PT]-E-P-C-P-P region; that stretch reads PQCPEPCPPP…PPKCTEPCPP (63 aa). Positions 83–108 are disordered; it reads PPSYQQKCPSVQPSPPCQQKCPPKNK. Residues 87–108 are compositionally biased toward low complexity; that stretch reads QQKCPSVQPSPPCQQKCPPKNK.

The protein belongs to the cornifin (SPRR) family. As to expression, expressed weakly in uterus.

The protein localises to the cytoplasm. Functionally, cross-linked envelope protein of keratinocytes. It is a keratinocyte protein that first appears in the cell cytosol, but ultimately becomes cross-linked to membrane proteins by transglutaminase. All that results in the formation of an insoluble envelope beneath the plasma membrane. The protein is Small proline-rich protein 2H (Sprr2h) of Mus musculus (Mouse).